The following is a 71-amino-acid chain: Prophage lysis protein S homolog EssQ (71 aa).

Belongs to the lambda phage S protein family.

The sequence is that of Prophage lysis protein S homolog EssQ (essQ) from Escherichia coli (strain K12).